We begin with the raw amino-acid sequence, 182 residues long: Isopentenyl-diphosphate Delta-isomerase (182 aa).

The Mn(2+) site is built by histidine 25 and histidine 32. The Nudix hydrolase domain occupies 30–164 (LLHLAFSSWL…PWAFSPWMVM (135 aa)). Cysteine 67 is an active-site residue. Histidine 69 provides a ligand contact to Mn(2+). Glutamate 87 provides a ligand contact to Mg(2+). Mn(2+) is bound by residues glutamate 114 and glutamate 116. Glutamate 116 is an active-site residue.

The protein belongs to the IPP isomerase type 1 family. As to quaternary structure, homodimer. Requires Mg(2+) as cofactor. Mn(2+) serves as cofactor.

Its subcellular location is the cytoplasm. The enzyme catalyses isopentenyl diphosphate = dimethylallyl diphosphate. Its pathway is isoprenoid biosynthesis; dimethylallyl diphosphate biosynthesis; dimethylallyl diphosphate from isopentenyl diphosphate: step 1/1. Functionally, catalyzes the 1,3-allylic rearrangement of the homoallylic substrate isopentenyl (IPP) to its highly electrophilic allylic isomer, dimethylallyl diphosphate (DMAPP). The polypeptide is Isopentenyl-diphosphate Delta-isomerase (Escherichia coli O9:H4 (strain HS)).